The primary structure comprises 302 residues: Glutaminase (302 aa).

Substrate-binding residues include serine 61, asparagine 111, glutamate 155, asparagine 162, tyrosine 186, tyrosine 238, and valine 256.

The protein belongs to the glutaminase family. Homotetramer.

The catalysed reaction is L-glutamine + H2O = L-glutamate + NH4(+). The protein is Glutaminase of Pseudomonas aeruginosa (strain ATCC 15692 / DSM 22644 / CIP 104116 / JCM 14847 / LMG 12228 / 1C / PRS 101 / PAO1).